A 557-amino-acid polypeptide reads, in one-letter code: Eudesmanediol synthase (557 aa).

The Mg(2+) site is built by D310 and D314. D310, D314, and R450 together coordinate substrate. Positions 310 to 314 match the DDXXD motif motif; that stretch reads DDTFD. N453 and S457 together coordinate Mg(2+).

The protein belongs to the terpene synthase family. Monomer. The cofactor is Mg(2+). It depends on Mn(2+) as a cofactor.

It is found in the cytoplasm. The catalysed reaction is (2E,6E)-farnesyl diphosphate + 2 H2O = 7-epi-ent-eudesmane-5,11-diol + diphosphate. Its pathway is secondary metabolite biosynthesis; terpenoid biosynthesis. In terms of biological role, component of the volatile terpenes biosynthesis pathways. Dihydroxylated sesquiterpenoid synthase that generates dually hydroxylated products directly from (E,E)-farnesyl diphosphate, primarily eudesmane-2,11-diol, along with two closely related structural isomers. The polypeptide is Eudesmanediol synthase (Zea mays (Maize)).